A 623-amino-acid polypeptide reads, in one-letter code: UvrABC system protein C (623 aa).

A GIY-YIG domain is found at 28–105 (GAPGVYRMLD…IKQLKPKYNV (78 aa)). The 36-residue stretch at 215-250 (TRVQEELAEQMMAASEAMEFERAAALRDRIRALTTV) folds into the UVR domain.

The protein belongs to the UvrC family. Interacts with UvrB in an incision complex.

The protein resides in the cytoplasm. Functionally, the UvrABC repair system catalyzes the recognition and processing of DNA lesions. UvrC both incises the 5' and 3' sides of the lesion. The N-terminal half is responsible for the 3' incision and the C-terminal half is responsible for the 5' incision. The protein is UvrABC system protein C of Ruegeria pomeroyi (strain ATCC 700808 / DSM 15171 / DSS-3) (Silicibacter pomeroyi).